A 413-amino-acid chain; its full sequence is Glucose-1-phosphate adenylyltransferase (413 aa).

Alpha-D-glucose 1-phosphate is bound by residues tyrosine 102, glycine 167, 182-183 (EK), and serine 200.

The protein belongs to the bacterial/plant glucose-1-phosphate adenylyltransferase family. As to quaternary structure, homotetramer.

The catalysed reaction is alpha-D-glucose 1-phosphate + ATP + H(+) = ADP-alpha-D-glucose + diphosphate. It functions in the pathway glycan biosynthesis; glycogen biosynthesis. Involved in the biosynthesis of ADP-glucose, a building block required for the elongation reactions to produce glycogen. Catalyzes the reaction between ATP and alpha-D-glucose 1-phosphate (G1P) to produce pyrophosphate and ADP-Glc. In Deinococcus radiodurans (strain ATCC 13939 / DSM 20539 / JCM 16871 / CCUG 27074 / LMG 4051 / NBRC 15346 / NCIMB 9279 / VKM B-1422 / R1), this protein is Glucose-1-phosphate adenylyltransferase.